A 543-amino-acid chain; its full sequence is MSADASTNSNASLDEKNLNITSEAEIKNEDVTAEPVLSTVLSPNGKIVYISDKVDEAMKLAEEAKEIEVTPEEDRKLRWKIDYCMFPLMCILYAVQFMDKISTSSAAVMGLRTDLKMHGDQYSWVTSAFYFGYLFMNLGPVQFIFQRTSHMSKMLAVFIVIWGMLLALHAAPTVKYPSFIVLRVLLGCAESVVTPCFTIITAQYWKTEEQFTRVSIWFGMNGLGSILINAIAYGVYIHQDSYAIKGWRTLFVITGVITIFIGILIFLWIPDDPSKARFLSKREKLMVVQRIRSNQQGFGNHEIKKYQIIEALKDVRTWLYFLFTVSSNIPNGGISSFMSILLNSDFGYSSKETLLMGLPTGAVELVGCPLFGILAVYAANKKIPFWKYKLSWAIFAAVLALIASCMLGFATNSKKARLAGAYLWYISPVSFICVLSNISANSSGYSKKWTVSSINLVAYAAANLAGPQTFIAKQAPKYHGAKVAMVVCYAVMIVLLSILLIVNLRENKRRDKIAAERGFPEETENLEFSDLTDFENPNFRYTL.

Residues 1 to 80 are Cytoplasmic-facing; it reads MSADASTNSN…PEEDRKLRWK (80 aa). The helical transmembrane segment at 81–97 threads the bilayer; sequence IDYCMFPLMCILYAVQF. The Extracellular portion of the chain corresponds to 98 to 123; the sequence is MDKISTSSAAVMGLRTDLKMHGDQYS. Residues 124-145 traverse the membrane as a helical segment; sequence WVTSAFYFGYLFMNLGPVQFIF. The Cytoplasmic segment spans residues 146–154; that stretch reads QRTSHMSKM. A helical membrane pass occupies residues 155-171; that stretch reads LAVFIVIWGMLLALHAA. Topologically, residues 172–178 are extracellular; it reads PTVKYPS. The chain crosses the membrane as a helical span at residues 179-200; that stretch reads FIVLRVLLGCAESVVTPCFTII. Residues 201 to 213 lie on the Cytoplasmic side of the membrane; sequence TAQYWKTEEQFTR. Residues 214-237 form a helical membrane-spanning segment; that stretch reads VSIWFGMNGLGSILINAIAYGVYI. Residues 238 to 248 lie on the Extracellular side of the membrane; it reads HQDSYAIKGWR. Residues 249–269 traverse the membrane as a helical segment; that stretch reads TLFVITGVITIFIGILIFLWI. The Cytoplasmic segment spans residues 270–317; it reads PDDPSKARFLSKREKLMVVQRIRSNQQGFGNHEIKKYQIIEALKDVRT. Residues 318-342 traverse the membrane as a helical segment; that stretch reads WLYFLFTVSSNIPNGGISSFMSILL. Residues 343 to 352 are Extracellular-facing; sequence NSDFGYSSKE. Residues 353 to 377 traverse the membrane as a helical segment; the sequence is TLLMGLPTGAVELVGCPLFGILAVY. At 378–389 the chain is on the cytoplasmic side; the sequence is AANKKIPFWKYK. A helical membrane pass occupies residues 390-411; it reads LSWAIFAAVLALIASCMLGFAT. Residues 412-417 lie on the Extracellular side of the membrane; it reads NSKKAR. The helical transmembrane segment at 418–435 threads the bilayer; it reads LAGAYLWYISPVSFICVL. The Cytoplasmic segment spans residues 436–453; the sequence is SNISANSSGYSKKWTVSS. The helical transmembrane segment at 454-472 threads the bilayer; sequence INLVAYAAANLAGPQTFIA. Residues 473–482 lie on the Extracellular side of the membrane; that stretch reads KQAPKYHGAK. Residues 483-504 traverse the membrane as a helical segment; it reads VAMVVCYAVMIVLLSILLIVNL. Residues 505–543 lie on the Cytoplasmic side of the membrane; it reads RENKRRDKIAAERGFPEETENLEFSDLTDFENPNFRYTL.

The protein belongs to the major facilitator superfamily. Allantoate permease family.

Its subcellular location is the membrane. Functionally, component of the allantoate transport system. The chain is Allantoate permease (DAL5) from Saccharomyces cerevisiae (strain ATCC 204508 / S288c) (Baker's yeast).